Here is a 234-residue protein sequence, read N- to C-terminus: UPF0758 protein Rfer_3252 (234 aa).

The 123-residue stretch at 112 to 234 (IFATPDAVKH…ALSMAERGLL (123 aa)) folds into the MPN domain. Zn(2+) contacts are provided by His183, His185, and Asp196. The JAMM motif signature appears at 183–196 (HNHPSGTVQPSRAD).

Belongs to the UPF0758 family.

This Albidiferax ferrireducens (strain ATCC BAA-621 / DSM 15236 / T118) (Rhodoferax ferrireducens) protein is UPF0758 protein Rfer_3252.